The following is a 57-amino-acid chain: UPF0391 membrane protein BRADO5617 (57 aa).

The next 2 membrane-spanning stretches (helical) occupy residues 1-21 and 30-50; these read MLGWVVTFLVIALIAGILGFG and IAKIIFFIAIVLFLVSAVVGL.

This sequence belongs to the UPF0391 family.

It localises to the cell membrane. The chain is UPF0391 membrane protein BRADO5617 from Bradyrhizobium sp. (strain ORS 278).